Consider the following 537-residue polypeptide: [Pyruvate dehydrogenase [acetyl-transferring]]-phosphatase 1, mitochondrial (537 aa).

A mitochondrion-targeting transit peptide spans 1 to 71; that stretch reads MPAPTQLFFP…WWQYTQGRRY (71 aa). A PPM-type phosphatase domain is found at 109-525; it reads ILGFDSNQLP…DDITIIVVQF (417 aa). Residues D144 and G145 each coordinate Mn(2+). K202 is subject to N6-acetyllysine. Positions 418 and 516 each coordinate Mn(2+).

Belongs to the PP2C family. Heterodimer of a catalytic (PDP1) and a regulatory (PDPR) subunit. Mn(2+) serves as cofactor. Requires Mg(2+) as cofactor.

It is found in the mitochondrion. It catalyses the reaction O-phospho-L-seryl-[pyruvate dehydrogenase E1 alpha subunit] + H2O = L-seryl-[pyruvate dehydrogenase E1 alpha subunit] + phosphate. Magnesium-dependent and calcium-stimulated. PDP1 activity strongly depends on its Ca(2+)-dependent binding to the lipoyl domain of E2 subunit of component of the pyruvate dehydrogenase complex. Its function is as follows. Mitochondrial enzyme that catalyzes the dephosphorylation and concomitant reactivation of the alpha subunit of the E1 component of the pyruvate dehydrogenase complex (PDC), thereby stimulating the conversion of pyruvate into acetyl-CoA. This Homo sapiens (Human) protein is [Pyruvate dehydrogenase [acetyl-transferring]]-phosphatase 1, mitochondrial.